Here is a 317-residue protein sequence, read N- to C-terminus: UV DNA damage endonuclease (317 aa).

Belongs to the uve1/UvsE family.

Component in a DNA repair pathway. Removal of UV LIGHT damaged nucleotides. Recognizes pyrimidine dimers and cleave a phosphodiester bond immediately 5' to the lesion. This Bacillus thuringiensis subsp. konkukian (strain 97-27) protein is UV DNA damage endonuclease.